Consider the following 692-residue polypeptide: Elongation factor G (692 aa).

Positions 8–282 (EKVRNIGIAA…AVVDYLPAPT (275 aa)) constitute a tr-type G domain. GTP is bound by residues 17 to 24 (AHIDAGKT), 81 to 85 (DTPGH), and 135 to 138 (NKMD).

The protein belongs to the TRAFAC class translation factor GTPase superfamily. Classic translation factor GTPase family. EF-G/EF-2 subfamily.

Its subcellular location is the cytoplasm. Functionally, catalyzes the GTP-dependent ribosomal translocation step during translation elongation. During this step, the ribosome changes from the pre-translocational (PRE) to the post-translocational (POST) state as the newly formed A-site-bound peptidyl-tRNA and P-site-bound deacylated tRNA move to the P and E sites, respectively. Catalyzes the coordinated movement of the two tRNA molecules, the mRNA and conformational changes in the ribosome. The chain is Elongation factor G from Trichormus variabilis (strain ATCC 29413 / PCC 7937) (Anabaena variabilis).